Here is a 351-residue protein sequence, read N- to C-terminus: Small ribosomal subunit biogenesis GTPase RsgA (351 aa).

One can recognise a CP-type G domain in the interval 107–277; sequence ENLLQRPDNF…LIDSPGIREF (171 aa). GTP-binding positions include 163–166 and 219–227; these read NKTD and GQSGVGKSS. Cys301, Cys306, His308, and Cys314 together coordinate Zn(2+).

This sequence belongs to the TRAFAC class YlqF/YawG GTPase family. RsgA subfamily. In terms of assembly, monomer. Associates with 30S ribosomal subunit, binds 16S rRNA. It depends on Zn(2+) as a cofactor.

Its subcellular location is the cytoplasm. Its function is as follows. One of several proteins that assist in the late maturation steps of the functional core of the 30S ribosomal subunit. Helps release RbfA from mature subunits. May play a role in the assembly of ribosomal proteins into the subunit. Circularly permuted GTPase that catalyzes slow GTP hydrolysis, GTPase activity is stimulated by the 30S ribosomal subunit. In Marinobacter nauticus (strain ATCC 700491 / DSM 11845 / VT8) (Marinobacter aquaeolei), this protein is Small ribosomal subunit biogenesis GTPase RsgA.